A 249-amino-acid polypeptide reads, in one-letter code: Diphthine synthase (249 aa).

Residues D83, L86, 111-112 (SI), L163, and L205 each bind S-adenosyl-L-methionine.

This sequence belongs to the diphthine synthase family. As to quaternary structure, homodimer.

The enzyme catalyses 2-[(3S)-amino-3-carboxypropyl]-L-histidyl-[translation elongation factor 2] + 3 S-adenosyl-L-methionine = diphthine-[translation elongation factor 2] + 3 S-adenosyl-L-homocysteine + 3 H(+). It functions in the pathway protein modification; peptidyl-diphthamide biosynthesis. Functionally, S-adenosyl-L-methionine-dependent methyltransferase that catalyzes the trimethylation of the amino group of the modified target histidine residue in translation elongation factor 2 (EF-2), to form an intermediate called diphthine. The three successive methylation reactions represent the second step of diphthamide biosynthesis. The sequence is that of Diphthine synthase from Pyrobaculum islandicum (strain DSM 4184 / JCM 9189 / GEO3).